A 231-amino-acid chain; its full sequence is Chromosome partition protein MukE (231 aa).

Residues 204 to 231 (TPEPSQQSLLENPTAEYDEEQTEWEDEA) are disordered. Positions 219 to 231 (EYDEEQTEWEDEA) are enriched in acidic residues.

Belongs to the MukE family. In terms of assembly, interacts, and probably forms a ternary complex, with MukF and MukB. The complex formation is stimulated by calcium or magnesium.

The protein resides in the cytoplasm. The protein localises to the nucleoid. Functionally, involved in chromosome condensation, segregation and cell cycle progression. May participate in facilitating chromosome segregation by condensation DNA from both sides of a centrally located replisome during cell division. Probably acts via its interaction with MukB and MukF. The protein is Chromosome partition protein MukE of Vibrio cholerae serotype O1 (strain ATCC 39315 / El Tor Inaba N16961).